The following is a 704-amino-acid chain: Polyribonucleotide nucleotidyltransferase (704 aa).

Residues Asp-491 and Asp-497 each contribute to the Mg(2+) site. Positions 558 to 617 constitute a KH domain; the sequence is PNYAVIEINSDKIRDVIGKGGATIRQLTEDTGAVIDIDDNGTIRIFGENKAATKEAIRQI. Residues 627–695 enclose the S1 motif domain; sequence GKVYKGTVAR…NRGRIKLTMK (69 aa).

This sequence belongs to the polyribonucleotide nucleotidyltransferase family. In terms of assembly, component of the RNA degradosome, which is a multiprotein complex involved in RNA processing and mRNA degradation. The cofactor is Mg(2+).

It localises to the cytoplasm. It carries out the reaction RNA(n+1) + phosphate = RNA(n) + a ribonucleoside 5'-diphosphate. In terms of biological role, involved in mRNA degradation. Catalyzes the phosphorolysis of single-stranded polyribonucleotides processively in the 3'- to 5'-direction. In Psychrobacter sp. (strain PRwf-1), this protein is Polyribonucleotide nucleotidyltransferase.